A 787-amino-acid chain; its full sequence is DNA ligase (787 aa).

Residues Asp-32 to Asp-36, Ser-81 to Leu-82, and Glu-121 contribute to the NAD(+) site. The N6-AMP-lysine intermediate role is filled by Lys-123. Residues Arg-144, Glu-181, Lys-297, and Lys-321 each coordinate NAD(+). Cys-415, Cys-418, Cys-445, and Cys-451 together coordinate Zn(2+). A BRCT domain is found at Val-703 to Asp-787.

It belongs to the NAD-dependent DNA ligase family. LigA subfamily. Requires Mg(2+) as cofactor. Mn(2+) serves as cofactor.

It carries out the reaction NAD(+) + (deoxyribonucleotide)n-3'-hydroxyl + 5'-phospho-(deoxyribonucleotide)m = (deoxyribonucleotide)n+m + AMP + beta-nicotinamide D-nucleotide.. DNA ligase that catalyzes the formation of phosphodiester linkages between 5'-phosphoryl and 3'-hydroxyl groups in double-stranded DNA using NAD as a coenzyme and as the energy source for the reaction. It is essential for DNA replication and repair of damaged DNA. In Pseudomonas syringae pv. syringae (strain B728a), this protein is DNA ligase.